We begin with the raw amino-acid sequence, 900 residues long: Exosome complex component 10 homolog (900 aa).

Disordered regions lie at residues 1 to 31 (MPRT…SEDV) and 147 to 174 (TSIE…TGTP). A compositionally biased stretch (basic and acidic residues) spans 8-28 (VHQEAKEESAQADQPPKKSAS). The 3'-5' exonuclease domain maps to 273–438 (VVDTVEKLKQ…YVYGRMTNDL (166 aa)). Residues D296, E298, D354, and D423 each contribute to the Mg(2+) site. The 81-residue stretch at 485–565 (DNRQLYALRG…LKARDQPLVK (81 aa)) folds into the HRDC domain. Positions 731–900 (EQLKRKHPQA…FSNVRKEGKK (170 aa)) are disordered. Positions 809-826 (RKQKKNQFQRGFKAKNRG) are enriched in basic residues. Residues 878–887 (NNRNNKQFNK) show a composition bias toward low complexity.

It belongs to the exosome component 10/RRP6 family. Component of the RNA exosome complex. Interacts with spn-A/Rad51; the interaction is required for the recruitment of spn-A to the DNA-damage response foci. Interacts with Su(var)3-9, a heterochromatin factor; the interaction promotes association of Rrp6 with a subset of genomic loci. Interacts with Su(var)205, a heterochromatin factor. Interacts with HDAC1, a heterochromatin factor. Mg(2+) serves as cofactor. As to expression, salivary gland (at protein level).

The protein resides in the nucleus. It localises to the chromosome. It is found in the cytoplasm. The protein localises to the cell cortex. Its subcellular location is the cytoskeleton. The protein resides in the microtubule organizing center. It localises to the centrosome. It is found in the spindle. The protein localises to the midbody. In terms of biological role, catalytic component of the RNA exosome complex which has 3'-&gt;5' exoribonuclease activity and participates in a multitude of cellular RNA processing and degradation events. Degrades a large variety of non-coding RNAs that are processed by the exosome, such as pre-rRNAs and some small nucleolar RNAs (snoRNAs). Degrades transcripts derived from different types of heterochromatic repeats, such as subtelomeric minisatellites and simple gagaa repeats. Degrades transcripts derived from transposons and transposon fragments. Degrades chromatin-associated transcripts and contributes to the compaction of heterochromatin. Required for the efficient repair of DNA double-strand breaks via homologous recombination after irradiation. Required for cell proliferation and error-free mitosis. The sequence is that of Exosome complex component 10 homolog from Drosophila melanogaster (Fruit fly).